Consider the following 344-residue polypeptide: DNA-directed RNA polymerase subunit alpha (344 aa).

The segment at 1–232 is alpha N-terminal domain (alpha-NTD); it reads MGQYTINLRE…HLFLPPFGLE (232 aa). An alpha C-terminal domain (alpha-CTD) region spans residues 270-344; that stretch reads LIKDQFLEYS…KRFGINLKLK (75 aa).

The protein belongs to the RNA polymerase alpha chain family. In terms of assembly, in plastids the minimal PEP RNA polymerase catalytic core is composed of four subunits: alpha, beta, beta', and beta''. When a (nuclear-encoded) sigma factor is associated with the core the holoenzyme is formed, which can initiate transcription.

It is found in the plastid. Its subcellular location is the chloroplast. It carries out the reaction RNA(n) + a ribonucleoside 5'-triphosphate = RNA(n+1) + diphosphate. In terms of biological role, DNA-dependent RNA polymerase catalyzes the transcription of DNA into RNA using the four ribonucleoside triphosphates as substrates. The polypeptide is DNA-directed RNA polymerase subunit alpha (Spirogyra maxima (Green alga)).